The sequence spans 443 residues: Serine/threonine-protein kinase ISR1 (443 aa).

Residues 135–415 (LPSNKLVGQG…LRNDLFQDWK (281 aa)) enclose the Protein kinase domain. ATP is bound by residues 141 to 149 (VGQGSYSYV) and K169. D280 functions as the Proton acceptor in the catalytic mechanism.

This sequence belongs to the protein kinase superfamily. Ser/Thr protein kinase family.

It catalyses the reaction L-seryl-[protein] + ATP = O-phospho-L-seryl-[protein] + ADP + H(+). It carries out the reaction L-threonyl-[protein] + ATP = O-phospho-L-threonyl-[protein] + ADP + H(+). Functionally, probable serine/threonine protein kinase which may function redundantly with MPK1-independent branch of the PCK1 pathway that is presumed to be required for the tolerance to high temperatures and staurosporine. In Saccharomyces cerevisiae (strain ATCC 204508 / S288c) (Baker's yeast), this protein is Serine/threonine-protein kinase ISR1 (ISR1).